We begin with the raw amino-acid sequence, 213 residues long: Ribosomal RNA small subunit methyltransferase G (213 aa).

Residues glycine 83, leucine 88, 132 to 133 (IE), and arginine 146 each bind S-adenosyl-L-methionine.

It belongs to the methyltransferase superfamily. RNA methyltransferase RsmG family.

Its subcellular location is the cytoplasm. It carries out the reaction guanosine(527) in 16S rRNA + S-adenosyl-L-methionine = N(7)-methylguanosine(527) in 16S rRNA + S-adenosyl-L-homocysteine. Functionally, specifically methylates the N7 position of guanine in position 527 of 16S rRNA. This Granulibacter bethesdensis (strain ATCC BAA-1260 / CGDNIH1) protein is Ribosomal RNA small subunit methyltransferase G.